The chain runs to 156 residues: 6,7-dimethyl-8-ribityllumazine synthase (156 aa).

5-amino-6-(D-ribitylamino)uracil is bound by residues phenylalanine 22, 57–59 (AYE), and 81–83 (TVI). (2S)-2-hydroxy-3-oxobutyl phosphate is bound at residue 86-87 (GT). Residue histidine 89 is the Proton donor of the active site. Phenylalanine 114 serves as a coordination point for 5-amino-6-(D-ribitylamino)uracil. Residue arginine 128 coordinates (2S)-2-hydroxy-3-oxobutyl phosphate.

It belongs to the DMRL synthase family. As to quaternary structure, forms an icosahedral capsid composed of 60 subunits, arranged as a dodecamer of pentamers.

The catalysed reaction is (2S)-2-hydroxy-3-oxobutyl phosphate + 5-amino-6-(D-ribitylamino)uracil = 6,7-dimethyl-8-(1-D-ribityl)lumazine + phosphate + 2 H2O + H(+). Its pathway is cofactor biosynthesis; riboflavin biosynthesis; riboflavin from 2-hydroxy-3-oxobutyl phosphate and 5-amino-6-(D-ribitylamino)uracil: step 1/2. In terms of biological role, catalyzes the formation of 6,7-dimethyl-8-ribityllumazine by condensation of 5-amino-6-(D-ribitylamino)uracil with 3,4-dihydroxy-2-butanone 4-phosphate. This is the penultimate step in the biosynthesis of riboflavin. This chain is 6,7-dimethyl-8-ribityllumazine synthase, found in Enterobacter sp. (strain 638).